A 66-amino-acid chain; its full sequence is Large ribosomal subunit protein bL35 (66 aa).

Composition is skewed to basic residues over residues 1-16 and 31-45; these read MPKQKTHRASAKRFKR and HRFHGKTKKQRRQLR. The interval 1–52 is disordered; it reads MPKQKTHRASAKRFKRTGNGGLKRSNAYTSHRFHGKTKKQRRQLRKASMVSA.

Belongs to the bacterial ribosomal protein bL35 family.

This chain is Large ribosomal subunit protein bL35, found in Ligilactobacillus salivarius (strain UCC118) (Lactobacillus salivarius).